The chain runs to 263 residues: Tetraspanin-7 (263 aa).

The Cytoplasmic portion of the chain corresponds to 1–7 (MVQCSNN). The chain crosses the membrane as a helical span at residues 8 to 28 (LLGILNFFTFLLSIPILSAGI). Residues 29 to 45 (WLGKNAATECERFLDKP) lie on the Extracellular side of the membrane. A helical transmembrane segment spans residues 46-66 (MVVLGIFLMFVSIAGLVGACC). Residues 67-75 (RVSCLLWLY) lie on the Cytoplasmic side of the membrane. A helical transmembrane segment spans residues 76 to 96 (LFAMFLLILLGFCFTIFAFAV). Topologically, residues 97–234 (TNRGAGEVIS…NIKNSWKKVA (138 aa)) are extracellular. A glycan (N-linked (GlcNAc...) asparagine) is linked at N180. The helical transmembrane segment at 235–255 (KVNIVFLIFLIIVYSVGCCAF) threads the bilayer. The Cytoplasmic segment spans residues 256-263 (RNNRKRSW).

It belongs to the tetraspanin (TM4SF) family.

It localises to the membrane. In terms of biological role, may be involved in the regulation of cell differentiation. In Arabidopsis thaliana (Mouse-ear cress), this protein is Tetraspanin-7 (TET7).